The chain runs to 475 residues: Ribulose bisphosphate carboxylase large chain (475 aa).

Positions 1–2 (MS) are excised as a propeptide. At P3 the chain carries N-acetylproline. K14 bears the N6,N6,N6-trimethyllysine mark. Positions 123 and 173 each coordinate substrate. K175 (proton acceptor) is an active-site residue. Position 177 (K177) interacts with substrate. Residues K201, D203, and E204 each coordinate Mg(2+). An N6-carboxylysine modification is found at K201. Residue H294 is the Proton acceptor of the active site. Residues R295, H327, and S379 each coordinate substrate.

Belongs to the RuBisCO large chain family. Type I subfamily. As to quaternary structure, heterohexadecamer of 8 large chains and 8 small chains; disulfide-linked. The disulfide link is formed within the large subunit homodimers. Requires Mg(2+) as cofactor. Post-translationally, the disulfide bond which can form in the large chain dimeric partners within the hexadecamer appears to be associated with oxidative stress and protein turnover.

The protein localises to the plastid. The protein resides in the chloroplast. The enzyme catalyses 2 (2R)-3-phosphoglycerate + 2 H(+) = D-ribulose 1,5-bisphosphate + CO2 + H2O. It catalyses the reaction D-ribulose 1,5-bisphosphate + O2 = 2-phosphoglycolate + (2R)-3-phosphoglycerate + 2 H(+). RuBisCO catalyzes two reactions: the carboxylation of D-ribulose 1,5-bisphosphate, the primary event in carbon dioxide fixation, as well as the oxidative fragmentation of the pentose substrate in the photorespiration process. Both reactions occur simultaneously and in competition at the same active site. This chain is Ribulose bisphosphate carboxylase large chain, found in Fagopyrum esculentum subsp. ancestrale (Wild buckwheat).